A 224-amino-acid chain; its full sequence is Lipoprotein-releasing system ATP-binding protein LolD (224 aa).

Residues Leu5 to Leu224 enclose the ABC transporter domain. Position 40–47 (Gly40–Ser47) interacts with ATP.

This sequence belongs to the ABC transporter superfamily. Lipoprotein translocase (TC 3.A.1.125) family. In terms of assembly, the complex is composed of two ATP-binding proteins (LolD) and two transmembrane proteins (LolC and LolE).

It is found in the cell inner membrane. In terms of biological role, part of the ABC transporter complex LolCDE involved in the translocation of mature outer membrane-directed lipoproteins, from the inner membrane to the periplasmic chaperone, LolA. Responsible for the formation of the LolA-lipoprotein complex in an ATP-dependent manner. The sequence is that of Lipoprotein-releasing system ATP-binding protein LolD from Anaplasma marginale (strain St. Maries).